We begin with the raw amino-acid sequence, 554 residues long: Rab GTPase-binding effector protein 2 (554 aa).

Positions 1-15 (MAAAPAALALDPQPQ) are enriched in low complexity. 3 disordered regions span residues 1–29 (MAAA…ELSR), 167–250 (IQRR…ETAS), and 375–395 (EQLP…DEAL). Residues 15 to 173 (QEEQKDASES…IQEIQRRPRQ (159 aa)) are a coiled coil. Positions 16-29 (EEQKDASESSELSR) are enriched in basic and acidic residues. Phosphoserine is present on residues Ser176, Ser180, Ser187, and Ser191. A coiled-coil region spans residues 274 to 512 (DSQWEQLQVE…LETSEQVQRD (239 aa)). The span at 377-386 (LPSSALQGSE) shows a compositional bias: polar residues.

This sequence belongs to the rabaptin family. In terms of assembly, heterodimer with RABGEF1. The dimer binds RAB5A that has been activated by GTP-binding. Interacts with SDCCAG8; this interaction is important for ciliogenesis regulation. Interacts with RAB4A; this interaction may mediate VEGFR2 cell surface expression.

It localises to the cytoplasm. The protein localises to the early endosome. Its subcellular location is the cytoskeleton. It is found in the microtubule organizing center. The protein resides in the centrosome. It localises to the cilium basal body. Plays a role in membrane trafficking and in homotypic early endosome fusion. Participates in arteriogenesis by regulating vascular endothelial growth factor receptor 2/VEGFR2 cell surface expression and endosomal trafficking. By interacting with SDCCAG8, localizes to centrosomes and plays a critical role in ciliogenesis. This is Rab GTPase-binding effector protein 2 (Rabep2) from Rattus norvegicus (Rat).